The following is a 493-amino-acid chain: Transcript termination protein A18 (493 aa).

In terms of domain architecture, Helicase ATP-binding spans 100–256 (MIESKRPLYI…NSIINIAKLS (157 aa)). ATP is bound at residue 113 to 120 (LACGFGKT). Residues 206–209 (DESH) carry the DESH box motif.

It belongs to the helicase family. Poxviruses subfamily. In terms of assembly, interacts with G2. Might be part of a transcription complex composed at least of G2, A18, and H5.

It is found in the virion. DNA helicase which seems to act as a postreplicative transcription termination factor. Involved in ATP-dependent release of nascent RNA. Forms a stable complex with single-stranded DNA, and to a lesser extent RNA. The polypeptide is Transcript termination protein A18 (Homo sapiens (Human)).